We begin with the raw amino-acid sequence, 418 residues long: Serine hydroxymethyltransferase (418 aa).

(6S)-5,6,7,8-tetrahydrofolate is bound by residues leucine 120 and 124–126 (GHL). Lysine 229 carries the N6-(pyridoxal phosphate)lysine modification. 353–355 (SPF) is a binding site for (6S)-5,6,7,8-tetrahydrofolate.

It belongs to the SHMT family. As to quaternary structure, homodimer. Requires pyridoxal 5'-phosphate as cofactor.

Its subcellular location is the cytoplasm. The enzyme catalyses (6R)-5,10-methylene-5,6,7,8-tetrahydrofolate + glycine + H2O = (6S)-5,6,7,8-tetrahydrofolate + L-serine. It functions in the pathway one-carbon metabolism; tetrahydrofolate interconversion. Its pathway is amino-acid biosynthesis; glycine biosynthesis; glycine from L-serine: step 1/1. Its function is as follows. Catalyzes the reversible interconversion of serine and glycine with tetrahydrofolate (THF) serving as the one-carbon carrier. This reaction serves as the major source of one-carbon groups required for the biosynthesis of purines, thymidylate, methionine, and other important biomolecules. Also exhibits THF-independent aldolase activity toward beta-hydroxyamino acids, producing glycine and aldehydes, via a retro-aldol mechanism. The protein is Serine hydroxymethyltransferase of Psychrobacter arcticus (strain DSM 17307 / VKM B-2377 / 273-4).